Consider the following 103-residue polypeptide: Pro-glucagon (103 aa).

Belongs to the glucagon family.

Its subcellular location is the secreted. Functionally, plays a key role in glucose metabolism and homeostasis. Regulates blood glucose by increasing gluconeogenesis and decreasing glycolysis. This is Pro-glucagon (gcg) from Aquarana catesbeiana (American bullfrog).